A 373-amino-acid polypeptide reads, in one-letter code: MPGWSCLVTGAGGFLGQRIVQLLMQEKDLEEIRVLDKFFRPETREQFFNLDTNIKVTVLEGDILDTQYLRKACQGISVVIHTAAVIDVTGVIPRQTILDVNLKGTQNLLEACIQASVPAFIFSSSVDVAGPNSYKEIILNGNEEEHHESIWSDPYPYSKKMAEKAVLAANGSMLKIGGTLHTCALRPMYIYGERSPFISNTIITALKNKNILGCTGKFSTANPVYVGNVAWAHILAARGLRDPKKSPNIQGEFYYISDDTPHQSYDDLNYTLSKEWGFCPDSSWSLPVPLLYWLAFMLETVSFLLSPIYRFIPPFNRHLVTLTGSTFTFSYKKAQRDLGYEPLVSWEEAKQKTSEWIGTLVEQHRETLDTKSQ.

The Proton acceptor role is filled by tyrosine 155. Residue lysine 159 participates in NAD(+) binding. A helical membrane pass occupies residues 288–308 (VPLLYWLAFMLETVSFLLSPI).

This sequence belongs to the 3-beta-HSD family. As to expression, expressed in skin and testis.

The protein resides in the endoplasmic reticulum membrane. It localises to the mitochondrion membrane. The catalysed reaction is a 3beta-hydroxy-Delta(5)-steroid + NAD(+) = a 3-oxo-Delta(5)-steroid + NADH + H(+). It carries out the reaction a 3-oxo-Delta(5)-steroid = a 3-oxo-Delta(4)-steroid. It functions in the pathway lipid metabolism; steroid biosynthesis. 3-beta-HSD is a bifunctional enzyme, that catalyzes the oxidative conversion of Delta(5)-ene-3-beta-hydroxy steroid, and the oxidative conversion of ketosteroids. The 3-beta-HSD enzymatic system plays a crucial role in the biosynthesis of all classes of hormonal steroids. May be involved in local production of progesterone. In Mus musculus (Mouse), this protein is 3 beta-hydroxysteroid dehydrogenase/Delta 5--&gt;4-isomerase type 6 (Hsd3b6).